The primary structure comprises 127 residues: Tyrosine-protein phosphatase 2 (127 aa).

The Tyrosine-protein phosphatase domain maps to 1-127; sequence QGSKVIVMVT…PRDCEAPILV (127 aa). Over residues 63–81 the composition is skewed to acidic residues; that stretch reads VYDNDDGTEQNDEQTEEEP. The segment at 63–82 is disordered; it reads VYDNDDGTEQNDEQTEEEPE.

The protein belongs to the protein-tyrosine phosphatase family.

The catalysed reaction is O-phospho-L-tyrosyl-[protein] + H2O = L-tyrosyl-[protein] + phosphate. The polypeptide is Tyrosine-protein phosphatase 2 (STY-2) (Styela plicata (Wrinkled sea squirt)).